A 119-amino-acid chain; its full sequence is Large ribosomal subunit protein uL18 (119 aa).

This sequence belongs to the universal ribosomal protein uL18 family. In terms of assembly, part of the 50S ribosomal subunit; part of the 5S rRNA/L5/L18/L25 subcomplex. Contacts the 5S and 23S rRNAs.

In terms of biological role, this is one of the proteins that bind and probably mediate the attachment of the 5S RNA into the large ribosomal subunit, where it forms part of the central protuberance. The chain is Large ribosomal subunit protein uL18 from Chlorobaculum tepidum (strain ATCC 49652 / DSM 12025 / NBRC 103806 / TLS) (Chlorobium tepidum).